Here is an 884-residue protein sequence, read N- to C-terminus: Nonsense-mediated mRNA decay factor EBS1 (884 aa).

Disordered stretches follow at residues 596–645 (NSMK…PTMG) and 755–774 (QGGL…NSAY). Residues 633-645 (RSSSLDSFSPTMG) are compositionally biased toward polar residues. The span at 760-772 (SSQQPSSMSSLNS) shows a compositional bias: low complexity.

The protein belongs to the EST1 family. As to quaternary structure, interacts with NMD helicase UPF1. Interacts with CDC33.

It localises to the nucleus. It is found in the chromosome. Its subcellular location is the telomere. The protein localises to the cytoplasm. The protein resides in the P-body. In terms of biological role, plays a role in nonsense-mediated mRNA decay (NMD). Recruits UPF1 to cytoplasmic mRNA decay bodies (P-bodies). Negative regulator of gene expression. Inhibits translation most likely through effects on eIF-4E (CDC33). Involved in telomere maintenance. The protein is Nonsense-mediated mRNA decay factor EBS1 of Saccharomyces cerevisiae (strain ATCC 204508 / S288c) (Baker's yeast).